A 316-amino-acid polypeptide reads, in one-letter code: Pentatricopeptide repeat-containing protein At1g19525 (316 aa).

PPR repeat units lie at residues 9-43 (DILT…GLRP), 44-78 (DEKI…ELKA), 79-113 (SEEV…SDGP), 115-149 (SFEA…GHKP), 150-184 (DDKC…GIEI), and 185-219 (GVIT…GEAP).

The protein belongs to the PPR family. P subfamily.

This chain is Pentatricopeptide repeat-containing protein At1g19525, found in Arabidopsis thaliana (Mouse-ear cress).